An 808-amino-acid chain; its full sequence is Protein SEY1 (808 aa).

The segment at 1 to 21 (MSSELSEGELSHTSSSSSFVP) is disordered. Topologically, residues 1–701 (MSSELSEGEL…KRSIVQHITQ (701 aa)) are cytoplasmic. Positions 57-286 (GNNYHIISVF…VGDELFKPEY (230 aa)) constitute a GB1/RHD3-type G domain. Position 67-74 (67-74 (GSQSTGKS)) interacts with GTP. A helical transmembrane segment spans residues 702-722 (IPYYIYLVIVFLGWNEFMAII). At 723–725 (RNP) the chain is on the lumenal side. The helical transmembrane segment at 726–746 (LLFSLALLLGASVYILYKLNL) threads the bilayer. Residues 747–808 (LKPAIVVAQR…YSDNIELDDM (62 aa)) lie on the Cytoplasmic side of the membrane.

The protein belongs to the TRAFAC class dynamin-like GTPase superfamily. GB1/RHD3 GTPase family. RHD3 subfamily.

The protein localises to the endoplasmic reticulum membrane. Cooperates with the reticulon proteins and tubule-shaping DP1 family proteins to generate and maintain the structure of the tubular endoplasmic reticulum network. Has GTPase activity, which is required for its function in ER organization. This is Protein SEY1 from Candida tropicalis (strain ATCC MYA-3404 / T1) (Yeast).